Consider the following 125-residue polypeptide: Large ribosomal subunit protein bL12 (125 aa).

The protein belongs to the bacterial ribosomal protein bL12 family. Homodimer. Part of the ribosomal stalk of the 50S ribosomal subunit. Forms a multimeric L10(L12)X complex, where L10 forms an elongated spine to which 2 to 4 L12 dimers bind in a sequential fashion. Binds GTP-bound translation factors.

Forms part of the ribosomal stalk which helps the ribosome interact with GTP-bound translation factors. Is thus essential for accurate translation. The protein is Large ribosomal subunit protein bL12 of Paraburkholderia phymatum (strain DSM 17167 / CIP 108236 / LMG 21445 / STM815) (Burkholderia phymatum).